The following is a 448-amino-acid chain: MGKEKIHISIVVIGHVDSGKSTTTGHLIYKLGGIDKRVIERFEKEAAEMNKRSFKYAWVLDKLKAERERGITIDIALWKFETTKYYCTVIDAPGHRDFIKNMITGTSQADCAVLIIDSTTGGFEAGISKDGQTREHALLAFTLGVKQMICCCNKMDATTPKYSKARYDEIVKEVSSYLKKVGYNPDKIPFVPISGFEGDNMIERSTNLDWYKGPTLLEALDQINEPKRPSDKPLRLPLQDVYKIGGIGTVPVGRVETGVIKPGMVVTFGPTGLTTEVKSVEMHHEALQEALPGDNVGFNVKNVAVKDLKRGYVASNSKDDPAKGAASFTAQVIIMNHPGQIGNGYAPVLDCHTSHIAVKFAEILTKIDRRSGKELEKEPKFLKNGDAGMVKMIPTKPMVVETFAEYPPLGRFAVRDMRQTVAVGVVKNVDKKDPTGAKVTKAAQKKGK.

The tr-type G domain occupies 5 to 230 (KIHISIVVIG…DQINEPKRPS (226 aa)). Residues 14–21 (GHVDSGKS) are G1. 14–21 (GHVDSGKS) lines the GTP pocket. An N6,N6-dimethyllysine modification is found at Lys55. Residues 70–74 (GITID) are G2. An N6,N6,N6-trimethyllysine modification is found at Lys79. The tract at residues 91-94 (DAPG) is G3. Residues 91-95 (DAPGH) and 153-156 (NKMD) contribute to the GTP site. The interval 153–156 (NKMD) is G4. Position 187 is an N6,N6,N6-trimethyllysine (Lys187). The G5 stretch occupies residues 194 to 196 (SGF). Residue Lys261 is modified to N6-methyllysine. Glu289 carries the post-translational modification 5-glutamyl glycerylphosphorylethanolamine. N6,N6,N6-trimethyllysine is present on Lys306. Glu362 carries the post-translational modification 5-glutamyl glycerylphosphorylethanolamine. Lys396 bears the N6,N6,N6-trimethyllysine mark.

This sequence belongs to the TRAFAC class translation factor GTPase superfamily. Classic translation factor GTPase family. EF-Tu/EF-1A subfamily.

It is found in the cytoplasm. Functionally, this protein promotes the GTP-dependent binding of aminoacyl-tRNA to the A-site of ribosomes during protein biosynthesis. In Solanum lycopersicum (Tomato), this protein is Elongation factor 1-alpha.